Reading from the N-terminus, the 213-residue chain is Uracil phosphoribosyltransferase (213 aa).

5-phospho-alpha-D-ribose 1-diphosphate is bound by residues arginine 77, arginine 102, and 129 to 137 (DPMLATGGS). Uracil is bound by residues isoleucine 198 and 203 to 205 (GDA). Aspartate 204 contributes to the 5-phospho-alpha-D-ribose 1-diphosphate binding site.

The protein belongs to the UPRTase family. Mg(2+) serves as cofactor.

The enzyme catalyses UMP + diphosphate = 5-phospho-alpha-D-ribose 1-diphosphate + uracil. Its pathway is pyrimidine metabolism; UMP biosynthesis via salvage pathway; UMP from uracil: step 1/1. Its activity is regulated as follows. Allosterically activated by GTP. In terms of biological role, catalyzes the conversion of uracil and 5-phospho-alpha-D-ribose 1-diphosphate (PRPP) to UMP and diphosphate. This chain is Uracil phosphoribosyltransferase, found in Mycobacteroides abscessus (strain ATCC 19977 / DSM 44196 / CCUG 20993 / CIP 104536 / JCM 13569 / NCTC 13031 / TMC 1543 / L948) (Mycobacterium abscessus).